The primary structure comprises 330 residues: Putative protein N-methyltransferase FAM86B2 (330 aa).

Met1 carries the post-translational modification N-acetylmethionine. S-adenosyl-L-methionine-binding positions include Trp139, 165-167 (GSG), Trp228, and Ala247.

Belongs to the class I-like SAM-binding methyltransferase superfamily. EEF2KMT family. In terms of assembly, interacts with EEF2KMT.

In Homo sapiens (Human), this protein is Putative protein N-methyltransferase FAM86B2 (FAM86B2).